The sequence spans 266 residues: 3-methyl-2-oxobutanoate hydroxymethyltransferase (266 aa).

Positions 45 and 84 each coordinate Mg(2+). 3-methyl-2-oxobutanoate is bound by residues 45–46 (DS), Asp84, and Lys113. Residue Glu115 participates in Mg(2+) binding. Catalysis depends on Glu183, which acts as the Proton acceptor.

Belongs to the PanB family. Homodecamer; pentamer of dimers. It depends on Mg(2+) as a cofactor.

It is found in the cytoplasm. It carries out the reaction 3-methyl-2-oxobutanoate + (6R)-5,10-methylene-5,6,7,8-tetrahydrofolate + H2O = 2-dehydropantoate + (6S)-5,6,7,8-tetrahydrofolate. The protein operates within cofactor biosynthesis; (R)-pantothenate biosynthesis; (R)-pantoate from 3-methyl-2-oxobutanoate: step 1/2. Its function is as follows. Catalyzes the reversible reaction in which hydroxymethyl group from 5,10-methylenetetrahydrofolate is transferred onto alpha-ketoisovalerate to form ketopantoate. This is 3-methyl-2-oxobutanoate hydroxymethyltransferase from Coxiella burnetii (strain CbuG_Q212) (Coxiella burnetii (strain Q212)).